We begin with the raw amino-acid sequence, 221 residues long: Probable septum site-determining protein MinC (221 aa).

Belongs to the MinC family. Interacts with MinD and FtsZ.

In terms of biological role, cell division inhibitor that blocks the formation of polar Z ring septums. Rapidly oscillates between the poles of the cell to destabilize FtsZ filaments that have formed before they mature into polar Z rings. Prevents FtsZ polymerization. The sequence is that of Probable septum site-determining protein MinC from Shewanella woodyi (strain ATCC 51908 / MS32).